The primary structure comprises 527 residues: Phosphoenolpyruvate carboxykinase (ATP) (527 aa).

Residues arginine 54, tyrosine 190, and lysine 196 each coordinate substrate. Residues lysine 196, histidine 215, and 231–239 each bind ATP; that span reads GLSGTGKTT. The Mn(2+) site is built by lysine 196 and histidine 215. Aspartate 252 serves as a coordination point for Mn(2+). ATP contacts are provided by residues glutamate 280, arginine 317, 436 to 437, and threonine 442; that span reads RI. A substrate-binding site is contributed by arginine 317.

It belongs to the phosphoenolpyruvate carboxykinase (ATP) family. The cofactor is Mn(2+).

The protein localises to the cytoplasm. It catalyses the reaction oxaloacetate + ATP = phosphoenolpyruvate + ADP + CO2. It participates in carbohydrate biosynthesis; gluconeogenesis. Functionally, involved in the gluconeogenesis. Catalyzes the conversion of oxaloacetate (OAA) to phosphoenolpyruvate (PEP) through direct phosphoryl transfer between the nucleoside triphosphate and OAA. This Oceanobacillus iheyensis (strain DSM 14371 / CIP 107618 / JCM 11309 / KCTC 3954 / HTE831) protein is Phosphoenolpyruvate carboxykinase (ATP).